A 111-amino-acid polypeptide reads, in one-letter code: MESNRGSQNGIQLLLGAEQEAQHIVNAARTGKQARMKQAKEEAEKEIAEFRAYMEAEFQRNVEQTSGDSGANVKRLEQETFAKIQHLKTEAESISHDVVQMLLRQVTTVKN.

This sequence belongs to the V-ATPase G subunit family. As to quaternary structure, V-ATPase is a heteromultimeric enzyme composed of a peripheral catalytic V1 complex (components A to H) attached to an integral membrane V0 proton pore complex (components: a, c, c', c'' and d).

Catalytic subunit of the peripheral V1 complex of vacuolar ATPase (V-ATPase). V-ATPase is responsible for acidifying a variety of intracellular compartments in eukaryotic cells. The sequence is that of V-type proton ATPase subunit G 2 (VATG2) from Nicotiana tabacum (Common tobacco).